We begin with the raw amino-acid sequence, 191 residues long: Signal peptidase IB (191 aa).

Residues 1–7 (MKKELLE) lie on the Cytoplasmic side of the membrane. The helical transmembrane segment at 8-28 (WIISIAVAFVILFIVGKFIVT) threads the bilayer. Over 29 to 191 (PYTIKGESMD…YNFNPENTKN (163 aa)) the chain is Extracellular. Residues Ser36 and Lys77 contribute to the active site.

Belongs to the peptidase S26 family.

The protein resides in the cell membrane. The enzyme catalyses Cleavage of hydrophobic, N-terminal signal or leader sequences from secreted and periplasmic proteins.. Essential for cell viability. This chain is Signal peptidase IB (spsB), found in Staphylococcus aureus (strain MRSA252).